A 212-amino-acid polypeptide reads, in one-letter code: uncharacterized protein (212 aa).

Residues 97-151 (SDASEAKNDDRRSDGRFALYSVSDTPETTTASRSADRSTNPKTAKHPKSAAKPTV) are disordered. A compositionally biased stretch (basic and acidic residues) spans 100–111 (SEAKNDDRRSDG).

This is an uncharacterized protein from Mycobacterium tuberculosis (strain CDC 1551 / Oshkosh).